We begin with the raw amino-acid sequence, 157 residues long: Endoribonuclease YbeY (157 aa).

Positions 114, 118, and 124 each coordinate Zn(2+).

Belongs to the endoribonuclease YbeY family. Zn(2+) is required as a cofactor.

It localises to the cytoplasm. Its function is as follows. Single strand-specific metallo-endoribonuclease involved in late-stage 70S ribosome quality control and in maturation of the 3' terminus of the 16S rRNA. This is Endoribonuclease YbeY from Yersinia pseudotuberculosis serotype O:1b (strain IP 31758).